The chain runs to 155 residues: 6,7-dimethyl-8-ribityllumazine synthase (155 aa).

5-amino-6-(D-ribitylamino)uracil is bound by residues Phe23, 57–59 (AFE), and 81–83 (AVI). Residue 86-87 (ST) participates in (2S)-2-hydroxy-3-oxobutyl phosphate binding. His89 acts as the Proton donor in catalysis. Position 114 (Phe114) interacts with 5-amino-6-(D-ribitylamino)uracil. Arg128 is a binding site for (2S)-2-hydroxy-3-oxobutyl phosphate.

The protein belongs to the DMRL synthase family.

It carries out the reaction (2S)-2-hydroxy-3-oxobutyl phosphate + 5-amino-6-(D-ribitylamino)uracil = 6,7-dimethyl-8-(1-D-ribityl)lumazine + phosphate + 2 H2O + H(+). The protein operates within cofactor biosynthesis; riboflavin biosynthesis; riboflavin from 2-hydroxy-3-oxobutyl phosphate and 5-amino-6-(D-ribitylamino)uracil: step 1/2. Catalyzes the formation of 6,7-dimethyl-8-ribityllumazine by condensation of 5-amino-6-(D-ribitylamino)uracil with 3,4-dihydroxy-2-butanone 4-phosphate. This is the penultimate step in the biosynthesis of riboflavin. The chain is 6,7-dimethyl-8-ribityllumazine synthase from Geobacter metallireducens (strain ATCC 53774 / DSM 7210 / GS-15).